The sequence spans 89 residues: Large ribosomal subunit protein bL27 (89 aa).

Residues M1–K24 are disordered.

The protein belongs to the bacterial ribosomal protein bL27 family.

In Microcystis aeruginosa (strain NIES-843 / IAM M-2473), this protein is Large ribosomal subunit protein bL27.